A 658-amino-acid polypeptide reads, in one-letter code: Putative endo-beta-N-acetylglucosaminidase (658 aa).

The N-terminal stretch at 1–23 (MKKVRFIFLALLFFLASPEGAMA) is a signal peptide. Cell wall-binding repeat units lie at residues 42–63 (ANEW…DANY), 65–84 (ENEW…GGYM), 86–105 (KSEW…DGKM), 124–145 (IEDW…DGQH), 147–166 (EKEW…GGYL), 185–206 (QQGW…NGNY), 208–227 (DKEW…GGYM), 229–248 (ANEW…DGKM), 250–271 (EKEW…GGYM), 273–292 (ANEW…DGKI), 294–315 (EKEW…GGYM), 317–336 (ANEW…DGKI), and 338–359 (EKEW…GGYM).

The protein belongs to the glycosyl hydrolase 73 family.

The protein resides in the secreted. The catalysed reaction is an N(4)-(oligosaccharide-(1-&gt;3)-[oligosaccharide-(1-&gt;6)]-beta-D-Man-(1-&gt;4)-beta-D-GlcNAc-(1-&gt;4)-alpha-D-GlcNAc)-L-asparaginyl-[protein] + H2O = an oligosaccharide-(1-&gt;3)-[oligosaccharide-(1-&gt;6)]-beta-D-Man-(1-&gt;4)-D-GlcNAc + N(4)-(N-acetyl-beta-D-glucosaminyl)-L-asparaginyl-[protein]. Functionally, plays an important role in cell wall degradation and cell separation. In Streptococcus pneumoniae serotype 4 (strain ATCC BAA-334 / TIGR4), this protein is Putative endo-beta-N-acetylglucosaminidase (lytB).